Here is a 234-residue protein sequence, read N- to C-terminus: Probable chemoreceptor glutamine deamidase CheD (234 aa).

Belongs to the CheD family.

The enzyme catalyses L-glutaminyl-[protein] + H2O = L-glutamyl-[protein] + NH4(+). In terms of biological role, probably deamidates glutamine residues to glutamate on methyl-accepting chemotaxis receptors (MCPs), playing an important role in chemotaxis. This is Probable chemoreceptor glutamine deamidase CheD from Burkholderia pseudomallei (strain 1710b).